A 640-amino-acid polypeptide reads, in one-letter code: Threonine--tRNA ligase (640 aa).

The TGS domain occupies Met1 to Thr59. Residues Asp240 to Pro531 are catalytic. Residues Cys332, His383, and His508 each contribute to the Zn(2+) site.

This sequence belongs to the class-II aminoacyl-tRNA synthetase family. Homodimer. Zn(2+) is required as a cofactor.

Its subcellular location is the cytoplasm. It carries out the reaction tRNA(Thr) + L-threonine + ATP = L-threonyl-tRNA(Thr) + AMP + diphosphate + H(+). Catalyzes the attachment of threonine to tRNA(Thr) in a two-step reaction: L-threonine is first activated by ATP to form Thr-AMP and then transferred to the acceptor end of tRNA(Thr). Also edits incorrectly charged L-seryl-tRNA(Thr). This chain is Threonine--tRNA ligase, found in Thermotoga maritima (strain ATCC 43589 / DSM 3109 / JCM 10099 / NBRC 100826 / MSB8).